The chain runs to 284 residues: Bifunctional protein FolD (284 aa).

Residues 165 to 167, isoleucine 190, and isoleucine 231 each bind NADP(+); that span reads GAS.

Belongs to the tetrahydrofolate dehydrogenase/cyclohydrolase family. Homodimer.

It carries out the reaction (6R)-5,10-methylene-5,6,7,8-tetrahydrofolate + NADP(+) = (6R)-5,10-methenyltetrahydrofolate + NADPH. The enzyme catalyses (6R)-5,10-methenyltetrahydrofolate + H2O = (6R)-10-formyltetrahydrofolate + H(+). The protein operates within one-carbon metabolism; tetrahydrofolate interconversion. Catalyzes the oxidation of 5,10-methylenetetrahydrofolate to 5,10-methenyltetrahydrofolate and then the hydrolysis of 5,10-methenyltetrahydrofolate to 10-formyltetrahydrofolate. In Alkaliphilus metalliredigens (strain QYMF), this protein is Bifunctional protein FolD.